The primary structure comprises 150 residues: Deoxyuridine 5'-triphosphate nucleotidohydrolase (150 aa).

Substrate-binding positions include 69–71, N82, and 86–88; these read RSG and TID.

The protein belongs to the dUTPase family. Mg(2+) is required as a cofactor.

It catalyses the reaction dUTP + H2O = dUMP + diphosphate + H(+). It participates in pyrimidine metabolism; dUMP biosynthesis; dUMP from dCTP (dUTP route): step 2/2. In terms of biological role, this enzyme is involved in nucleotide metabolism: it produces dUMP, the immediate precursor of thymidine nucleotides and it decreases the intracellular concentration of dUTP so that uracil cannot be incorporated into DNA. This is Deoxyuridine 5'-triphosphate nucleotidohydrolase from Syntrophus aciditrophicus (strain SB).